A 43-amino-acid polypeptide reads, in one-letter code: Large ribosomal subunit protein uL5 (43 aa).

The protein belongs to the universal ribosomal protein uL5 family. As to quaternary structure, part of the 50S ribosomal subunit; part of the 5S rRNA/L5/L18/L25 subcomplex. Contacts the 5S rRNA and the P site tRNA. Forms a bridge to the 30S subunit in the 70S ribosome.

In terms of biological role, this is one of the proteins that bind and probably mediate the attachment of the 5S RNA into the large ribosomal subunit, where it forms part of the central protuberance. In the 70S ribosome it contacts protein S13 of the 30S subunit (bridge B1b), connecting the 2 subunits; this bridge is implicated in subunit movement. Contacts the P site tRNA; the 5S rRNA and some of its associated proteins might help stabilize positioning of ribosome-bound tRNAs. The protein is Large ribosomal subunit protein uL5 (rplE) of Serratia marcescens.